We begin with the raw amino-acid sequence, 447 residues long: Hemogen (447 aa).

The interval 1–91 (MDLGKDQSLS…EMKVELPSQL (91 aa)) is disordered. The interval 7 to 86 (QSLSKLHQTP…RQQNTEMKVE (80 aa)) is necessary for nuclear localization. 2 stretches are compositionally biased toward basic and acidic residues: residues 14–25 (QTPDHHQEESHV) and 35–49 (RNRE…EAQE). Positions 59 to 78 (EKKHKRQRTGKRSERGRKRQ) are enriched in basic residues. Phosphoserine occurs at positions 89 and 122. The interval 137–156 (QESVTLQENSSEYQATAVQN) is disordered. S200 bears the Phosphoserine mark. 2 disordered regions span residues 210-280 (AKVL…MAVP) and 306-337 (AMSK…PGSE). T217 is modified (phosphothreonine). Over residues 306 to 316 (AMSKDPSHKTT) the composition is skewed to basic and acidic residues.

The protein localises to the nucleus. Functionally, regulates the proliferation and differentiation of hematopoietic cells. Overexpression block the TPA-induced megakaryocytic differentiation in the K562 cell model. May also prevent cell apoptosis through the activation of the nuclear factor-kappa B (NF-kB). This is Hemogen (HEMGN) from Bos taurus (Bovine).